The following is a 275-amino-acid chain: Mitochondrial fission factor homolog A (275 aa).

Topologically, residues 1 to 255 (MAEVNRIHYE…ENKERAKREM (255 aa)) are cytoplasmic. The segment at 100–171 (DFLEPEPAAN…PLISPEDSQN (72 aa)) is disordered. Over residues 114–130 (PREEMKSHFRSRREQCR) the composition is skewed to basic and acidic residues. Positions 131–142 (SENSTMRRNGQI) are enriched in polar residues. The stretch at 223 to 253 (LTDAASLRRQIIKLNRRLQLLEHENKERAKR) forms a coiled coil. The chain crosses the membrane as a helical; Anchor for type IV membrane protein span at residues 256–273 (VMYSLTVAFWLVNSWIWL). Over 274–275 (RR) the chain is Extracellular.

This sequence belongs to the Tango11 family.

Its subcellular location is the mitochondrion outer membrane. The protein localises to the peroxisome. Plays a role in mitochondrial and peroxisomal fission. Promotes the recruitment and association of the fission mediator dynamin-related protein 1 (DNM1L) to the mitochondrial surface. This chain is Mitochondrial fission factor homolog A, found in Danio rerio (Zebrafish).